The primary structure comprises 231 residues: NADH-ubiquinone oxidoreductase chain 4 (231 aa).

The next 6 helical transmembrane spans lie at 1 to 21 (PIAG…YGII), 34 to 54 (MFLP…LTCL), 62 to 84 (LIAY…QTPW), 89 to 111 (AMAL…NTTY), 128 to 148 (ILPM…AIPP), and 169 to 189 (TIIM…HMFL).

This sequence belongs to the complex I subunit 4 family.

It is found in the mitochondrion membrane. The catalysed reaction is a ubiquinone + NADH + 5 H(+)(in) = a ubiquinol + NAD(+) + 4 H(+)(out). In terms of biological role, core subunit of the mitochondrial membrane respiratory chain NADH dehydrogenase (Complex I) that is believed to belong to the minimal assembly required for catalysis. Complex I functions in the transfer of electrons from NADH to the respiratory chain. The immediate electron acceptor for the enzyme is believed to be ubiquinone. In Bothrops erythromelas (Caatinga lance head), this protein is NADH-ubiquinone oxidoreductase chain 4 (MT-ND4).